Consider the following 528-residue polypeptide: Protein phosphatase 1 regulatory subunit 16A (528 aa).

The stretch at 18–45 (STQERLKHAQKRRAQQVKMWAQAEKEAQ) forms a coiled coil. A disordered region spans residues 19–59 (TQERLKHAQKRRAQQVKMWAQAEKEAQGKKGPGERPRKEAA). The span at 40–58 (AEKEAQGKKGPGERPRKEA) shows a compositional bias: basic and acidic residues. 5 ANK repeats span residues 70–99 (PPSVVLLEAAARNDLEEVRQFLGSGVSPDL), 103–132 (DGLTALHQCCIDDFREMVQQLLEAGANINA), 136–165 (ECWTPLHAAATCGHLHLVELLIASGANLLA), 231–260 (HGATLLHVAAANGFSEAAALLLEHRASLSA), and 264–293 (DGWEPLHAAAYWGQVPLVELLVAHGADLNA). 2 disordered regions span residues 330 to 351 (RQRSLLRRRTSSAGSRGKVVRR) and 367 to 421 (QEAI…SPVR). S433 is subject to Phosphoserine. Residues 462 to 505 (QRAAAKLQRPPPEGPESPETAEPGLPGDTVTPQPDCGFRAGGDP) form a disordered region. A lipid anchor (S-palmitoyl cysteine) is attached at C524. A Cysteine methyl ester modification is found at C525. A lipid anchor (S-farnesyl cysteine) is attached at C525. The propeptide at 526–528 (LLM) is removed in mature form.

As to quaternary structure, binds PP1.

It localises to the cell membrane. Functionally, inhibits protein phosphatase 1 activity toward phosphorylase, myosin light chain and myosin substrates. The chain is Protein phosphatase 1 regulatory subunit 16A (PPP1R16A) from Homo sapiens (Human).